A 163-amino-acid chain; its full sequence is 2-C-methyl-D-erythritol 2,4-cyclodiphosphate synthase (163 aa).

2 residues coordinate a divalent metal cation: Asp12 and His14. 4-CDP-2-C-methyl-D-erythritol 2-phosphate-binding positions include 12–14 (DVH) and 38–39 (HS). A divalent metal cation is bound at residue His46. Residues 60–62 (DIG), 65–69 (FPDTD), 136–139 (TTTE), Phe143, and Arg146 each bind 4-CDP-2-C-methyl-D-erythritol 2-phosphate.

Belongs to the IspF family. In terms of assembly, homotrimer. Requires a divalent metal cation as cofactor.

It carries out the reaction 4-CDP-2-C-methyl-D-erythritol 2-phosphate = 2-C-methyl-D-erythritol 2,4-cyclic diphosphate + CMP. It participates in isoprenoid biosynthesis; isopentenyl diphosphate biosynthesis via DXP pathway; isopentenyl diphosphate from 1-deoxy-D-xylulose 5-phosphate: step 4/6. Functionally, involved in the biosynthesis of isopentenyl diphosphate (IPP) and dimethylallyl diphosphate (DMAPP), two major building blocks of isoprenoid compounds. Catalyzes the conversion of 4-diphosphocytidyl-2-C-methyl-D-erythritol 2-phosphate (CDP-ME2P) to 2-C-methyl-D-erythritol 2,4-cyclodiphosphate (ME-CPP) with a corresponding release of cytidine 5-monophosphate (CMP). This Acinetobacter baylyi (strain ATCC 33305 / BD413 / ADP1) protein is 2-C-methyl-D-erythritol 2,4-cyclodiphosphate synthase.